The chain runs to 431 residues: Serine--tRNA ligase (431 aa).

237–239 serves as a coordination point for L-serine; that stretch reads TAE. 268–270 lines the ATP pocket; sequence RSE. Residue Glu291 participates in L-serine binding. ATP is bound at residue 355–358; sequence EISS. L-serine is bound at residue Ser390.

The protein belongs to the class-II aminoacyl-tRNA synthetase family. Type-1 seryl-tRNA synthetase subfamily. In terms of assembly, homodimer. The tRNA molecule binds across the dimer.

The protein resides in the cytoplasm. The enzyme catalyses tRNA(Ser) + L-serine + ATP = L-seryl-tRNA(Ser) + AMP + diphosphate + H(+). It catalyses the reaction tRNA(Sec) + L-serine + ATP = L-seryl-tRNA(Sec) + AMP + diphosphate + H(+). The protein operates within aminoacyl-tRNA biosynthesis; selenocysteinyl-tRNA(Sec) biosynthesis; L-seryl-tRNA(Sec) from L-serine and tRNA(Sec): step 1/1. Functionally, catalyzes the attachment of serine to tRNA(Ser). Is also able to aminoacylate tRNA(Sec) with serine, to form the misacylated tRNA L-seryl-tRNA(Sec), which will be further converted into selenocysteinyl-tRNA(Sec). The polypeptide is Serine--tRNA ligase (Neisseria meningitidis serogroup B (strain ATCC BAA-335 / MC58)).